A 451-amino-acid chain; its full sequence is Bifunctional protein GlmU (451 aa).

The pyrophosphorylase stretch occupies residues 1 to 226 (MVAVAILAAG…YLEISGINDR (226 aa)). UDP-N-acetyl-alpha-D-glucosamine contacts are provided by residues 7–10 (LAAG), Lys21, Gln73, and 78–79 (GT). Asp103 provides a ligand contact to Mg(2+). UDP-N-acetyl-alpha-D-glucosamine is bound by residues Gly140, Glu155, Asn170, and Asn224. Asn224 contributes to the Mg(2+) binding site. The segment at 227–247 (KQLATAYDILQNRIKDYWMRA) is linker. The tract at residues 248 to 451 (GVTLIDPDSI…ISGWRMKTDD (204 aa)) is N-acetyltransferase. UDP-N-acetyl-alpha-D-glucosamine is bound by residues Arg329 and Lys347. His359 (proton acceptor) is an active-site residue. Residues Tyr362 and Asn373 each contribute to the UDP-N-acetyl-alpha-D-glucosamine site. Acetyl-CoA contacts are provided by residues Ala376, 382–383 (NY), Ala419, and Arg436.

It in the N-terminal section; belongs to the N-acetylglucosamine-1-phosphate uridyltransferase family. This sequence in the C-terminal section; belongs to the transferase hexapeptide repeat family. In terms of assembly, homotrimer. It depends on Mg(2+) as a cofactor.

The protein localises to the cytoplasm. It carries out the reaction alpha-D-glucosamine 1-phosphate + acetyl-CoA = N-acetyl-alpha-D-glucosamine 1-phosphate + CoA + H(+). It catalyses the reaction N-acetyl-alpha-D-glucosamine 1-phosphate + UTP + H(+) = UDP-N-acetyl-alpha-D-glucosamine + diphosphate. Its pathway is nucleotide-sugar biosynthesis; UDP-N-acetyl-alpha-D-glucosamine biosynthesis; N-acetyl-alpha-D-glucosamine 1-phosphate from alpha-D-glucosamine 6-phosphate (route II): step 2/2. The protein operates within nucleotide-sugar biosynthesis; UDP-N-acetyl-alpha-D-glucosamine biosynthesis; UDP-N-acetyl-alpha-D-glucosamine from N-acetyl-alpha-D-glucosamine 1-phosphate: step 1/1. It participates in bacterial outer membrane biogenesis; LPS lipid A biosynthesis. Catalyzes the last two sequential reactions in the de novo biosynthetic pathway for UDP-N-acetylglucosamine (UDP-GlcNAc). The C-terminal domain catalyzes the transfer of acetyl group from acetyl coenzyme A to glucosamine-1-phosphate (GlcN-1-P) to produce N-acetylglucosamine-1-phosphate (GlcNAc-1-P), which is converted into UDP-GlcNAc by the transfer of uridine 5-monophosphate (from uridine 5-triphosphate), a reaction catalyzed by the N-terminal domain. This chain is Bifunctional protein GlmU, found in Gloeothece citriformis (strain PCC 7424) (Cyanothece sp. (strain PCC 7424)).